Here is a 458-residue protein sequence, read N- to C-terminus: Protein unc-93 homolog A (458 aa).

The next 5 membrane-spanning stretches (helical) occupy residues 8–28 (VLVV…LQNL), 42–62 (TLST…PILI), 69–89 (WTIV…FHAN), 90–110 (WYTL…LWSA), and 140–160 (IFFL…SLVF). Asn-190 is a glycosylation site (N-linked (GlcNAc...) asparagine). 7 consecutive transmembrane segments (helical) span residues 202–222 (TLLG…AVFL), 258–275 (LCLL…QEFL), 286–306 (CALG…MTAL), 321–341 (AALY…FLLW), 345–365 (TNQL…DAVW), 390–410 (LGEA…CVST), and 412–432 (LYIL…VEYL).

This sequence belongs to the unc-93 family.

It localises to the cell membrane. This Mus musculus (Mouse) protein is Protein unc-93 homolog A (Unc93a).